A 131-amino-acid polypeptide reads, in one-letter code: Ribonuclease VapC42 (131 aa).

The region spanning 1–125 (MIVDTSAIVA…FRGDDFTHTD (125 aa)) is the PINc domain. Residues Asp4 and Asp100 each coordinate Mg(2+).

This sequence belongs to the PINc/VapC protein family. It depends on Mg(2+) as a cofactor.

Functionally, toxic component of a type II toxin-antitoxin (TA) system. An RNase. Its cognate antitoxin is VapB42. In Mycobacterium tuberculosis (strain CDC 1551 / Oshkosh), this protein is Ribonuclease VapC42.